Reading from the N-terminus, the 332-residue chain is GTP 3',8-cyclase (332 aa).

The Radical SAM core domain maps to 7–221 (QYERLHDYVR…FDLCKQAGLD (215 aa)). R16 serves as a coordination point for GTP. Residues C23 and C27 each contribute to the [4Fe-4S] cluster site. Residue Y29 coordinates S-adenosyl-L-methionine. A [4Fe-4S] cluster-binding site is contributed by C30. GTP is bound at residue R66. G70 contributes to the S-adenosyl-L-methionine binding site. T97 is a binding site for GTP. S121 provides a ligand contact to S-adenosyl-L-methionine. K158 lines the GTP pocket. M192 is an S-adenosyl-L-methionine binding site. Residues C256 and C259 each coordinate [4Fe-4S] cluster. 261–263 (RLR) contributes to the GTP binding site. C273 is a binding site for [4Fe-4S] cluster.

It belongs to the radical SAM superfamily. MoaA family. As to quaternary structure, monomer and homodimer. It depends on [4Fe-4S] cluster as a cofactor.

The enzyme catalyses GTP + AH2 + S-adenosyl-L-methionine = (8S)-3',8-cyclo-7,8-dihydroguanosine 5'-triphosphate + 5'-deoxyadenosine + L-methionine + A + H(+). It functions in the pathway cofactor biosynthesis; molybdopterin biosynthesis. Functionally, catalyzes the cyclization of GTP to (8S)-3',8-cyclo-7,8-dihydroguanosine 5'-triphosphate. The protein is GTP 3',8-cyclase of Limosilactobacillus fermentum (strain NBRC 3956 / LMG 18251) (Lactobacillus fermentum).